The primary structure comprises 225 residues: Ribonuclease 3 (225 aa).

The RNase III domain maps to 5–127 (VTELYKTIDY…IIGAVFLDSD (123 aa)). Residue glutamate 40 coordinates Mg(2+). Aspartate 44 is an active-site residue. Residues aspartate 113 and glutamate 116 each contribute to the Mg(2+) site. Glutamate 116 is a catalytic residue. A DRBM domain is found at 154-223 (DPKTLLQEHL…AEKALKILKN (70 aa)).

It belongs to the ribonuclease III family. Homodimer. Requires Mg(2+) as cofactor.

The protein localises to the cytoplasm. The catalysed reaction is Endonucleolytic cleavage to 5'-phosphomonoester.. In terms of biological role, digests double-stranded RNA. Involved in the processing of primary rRNA transcript to yield the immediate precursors to the large and small rRNAs (23S and 16S). Processes some mRNAs, and tRNAs when they are encoded in the rRNA operon. Processes pre-crRNA and tracrRNA of type II CRISPR loci if present in the organism. The sequence is that of Ribonuclease 3 from Pseudoalteromonas translucida (strain TAC 125).